The following is an 863-amino-acid chain: Aminopeptidase N (863 aa).

Residues Glu-124 and Gly-263–Asn-267 each bind substrate. His-299 lines the Zn(2+) pocket. Glu-300 (proton acceptor) is an active-site residue. 2 residues coordinate Zn(2+): His-303 and Glu-322.

It belongs to the peptidase M1 family. Zn(2+) is required as a cofactor.

The catalysed reaction is Release of an N-terminal amino acid, Xaa-|-Yaa- from a peptide, amide or arylamide. Xaa is preferably Ala, but may be most amino acids including Pro (slow action). When a terminal hydrophobic residue is followed by a prolyl residue, the two may be released as an intact Xaa-Pro dipeptide.. In terms of biological role, aminopeptidase N is involved in the degradation of intracellular peptides generated by protein breakdown during normal growth as well as in response to nutrient starvation. This is Aminopeptidase N (pepN) from Caulobacter vibrioides (strain ATCC 19089 / CIP 103742 / CB 15) (Caulobacter crescentus).